Reading from the N-terminus, the 224-residue chain is CASP-like protein 3A1 (224 aa).

Topologically, residues 1–59 (MMMNGQKLAPAAEVAVQLPESKVAADNISGTMSGPLVGASGGGTTAAMRPFGRKAEVMH) are cytoplasmic. The helical transmembrane segment at 60–80 (VLLRLLCIITSVAALSFMFTA) threads the bilayer. The Extracellular portion of the chain corresponds to 81-106 (QQSSTISIYGFMLPVQSKWSFSHSFE). Residues 107–127 (YLVGVSAAVAAHSLLQLLISM) traverse the membrane as a helical segment. At 128–142 (SRLLRKSPVIPSRSH) the chain is on the cytoplasmic side. A helical membrane pass occupies residues 143–163 (AWLIFAGDQVFAYAMISAGAA). Over 164-192 (ASGVTNLNRTGIQHTALPNFCKPLQSFCD) the chain is Extracellular. The N-linked (GlcNAc...) asparagine glycan is linked to Asn-171. A helical transmembrane segment spans residues 193-213 (HVAVSIFFTFTSCFLLAASAV). Topologically, residues 214 to 224 (QEVIWLSRSKY) are cytoplasmic.

The protein belongs to the Casparian strip membrane proteins (CASP) family. In terms of assembly, homodimer and heterodimers.

It localises to the cell membrane. The protein is CASP-like protein 3A1 of Populus trichocarpa (Western balsam poplar).